A 300-amino-acid polypeptide reads, in one-letter code: Acetaldehyde dehydrogenase (300 aa).

10–13 (SGNI) is an NAD(+) binding site. Catalysis depends on Cys-129, which acts as the Acyl-thioester intermediate. Residues 160-168 (SAGPGTRKN) and Asn-271 contribute to the NAD(+) site.

The protein belongs to the acetaldehyde dehydrogenase family.

The enzyme catalyses acetaldehyde + NAD(+) + CoA = acetyl-CoA + NADH + H(+). In Alkalilimnicola ehrlichii (strain ATCC BAA-1101 / DSM 17681 / MLHE-1), this protein is Acetaldehyde dehydrogenase.